Reading from the N-terminus, the 442-residue chain is Histidine--tRNA ligase (442 aa).

The protein belongs to the class-II aminoacyl-tRNA synthetase family. In terms of assembly, homodimer.

The protein localises to the cytoplasm. The catalysed reaction is tRNA(His) + L-histidine + ATP = L-histidyl-tRNA(His) + AMP + diphosphate + H(+). This is Histidine--tRNA ligase from Rhodopirellula baltica (strain DSM 10527 / NCIMB 13988 / SH1).